A 396-amino-acid chain; its full sequence is Purple acid phosphatase 5 (396 aa).

The signal sequence occupies residues 1 to 13; sequence MSLETFPPPAGYN. Asn-58 is a glycosylation site (N-linked (GlcNAc...) asparagine). Asp-125 contributes to the Fe cation binding site. N-linked (GlcNAc...) asparagine glycosylation occurs at Asn-133. The Fe cation site is built by Asp-153 and Tyr-156. Asp-153 contacts Zn(2+). Residue Asn-190 coordinates Zn(2+). Asn-190 contacts substrate. Residue Asn-238 is glycosylated (N-linked (GlcNAc...) asparagine). His-250 is a Zn(2+) binding site. Residue His-260 is the Proton donor of the active site. His-287 contributes to the Zn(2+) binding site. 287 to 289 lines the substrate pocket; that stretch reads HVH. His-289 contributes to the Fe cation binding site. N-linked (GlcNAc...) asparagine glycans are attached at residues Asn-303 and Asn-360.

This sequence belongs to the metallophosphoesterase superfamily. Purple acid phosphatase family. As to quaternary structure, homodimer. Requires Fe cation as cofactor. It depends on Zn(2+) as a cofactor.

It is found in the secreted. It carries out the reaction a phosphate monoester + H2O = an alcohol + phosphate. The chain is Purple acid phosphatase 5 (PAP5) from Arabidopsis thaliana (Mouse-ear cress).